Here is a 346-residue protein sequence, read N- to C-terminus: Holliday junction branch migration complex subunit RuvB (346 aa).

Residues 4-185 form a large ATPase domain (RuvB-L) region; it reads SDRIITASPF…FGIVSRLEFY (182 aa). ATP contacts are provided by residues Leu24, Arg25, Gly66, Lys69, Thr70, Thr71, 132–134, Arg175, Tyr185, and Arg222; that span reads EDY. Thr70 lines the Mg(2+) pocket. The segment at 186 to 256 is small ATPAse domain (RuvB-S); the sequence is TSDELSKIVT…VADAALQMLD (71 aa). A head domain (RuvB-H) region spans residues 259-346; sequence AAGLDVLDRK…AATPGLFNPD (88 aa). Positions 295, 314, and 319 each coordinate DNA.

This sequence belongs to the RuvB family. In terms of assembly, homohexamer. Forms an RuvA(8)-RuvB(12)-Holliday junction (HJ) complex. HJ DNA is sandwiched between 2 RuvA tetramers; dsDNA enters through RuvA and exits via RuvB. An RuvB hexamer assembles on each DNA strand where it exits the tetramer. Each RuvB hexamer is contacted by two RuvA subunits (via domain III) on 2 adjacent RuvB subunits; this complex drives branch migration. In the full resolvosome a probable DNA-RuvA(4)-RuvB(12)-RuvC(2) complex forms which resolves the HJ.

The protein resides in the cytoplasm. It carries out the reaction ATP + H2O = ADP + phosphate + H(+). The RuvA-RuvB-RuvC complex processes Holliday junction (HJ) DNA during genetic recombination and DNA repair, while the RuvA-RuvB complex plays an important role in the rescue of blocked DNA replication forks via replication fork reversal (RFR). RuvA specifically binds to HJ cruciform DNA, conferring on it an open structure. The RuvB hexamer acts as an ATP-dependent pump, pulling dsDNA into and through the RuvAB complex. RuvB forms 2 homohexamers on either side of HJ DNA bound by 1 or 2 RuvA tetramers; 4 subunits per hexamer contact DNA at a time. Coordinated motions by a converter formed by DNA-disengaged RuvB subunits stimulates ATP hydrolysis and nucleotide exchange. Immobilization of the converter enables RuvB to convert the ATP-contained energy into a lever motion, pulling 2 nucleotides of DNA out of the RuvA tetramer per ATP hydrolyzed, thus driving DNA branch migration. The RuvB motors rotate together with the DNA substrate, which together with the progressing nucleotide cycle form the mechanistic basis for DNA recombination by continuous HJ branch migration. Branch migration allows RuvC to scan DNA until it finds its consensus sequence, where it cleaves and resolves cruciform DNA. The sequence is that of Holliday junction branch migration complex subunit RuvB from Nitrosomonas eutropha (strain DSM 101675 / C91 / Nm57).